A 358-amino-acid polypeptide reads, in one-letter code: Methylthioribose-1-phosphate isomerase (358 aa).

Substrate contacts are provided by residues 54–56 (RGA), Arg96, and Gln205. The Proton donor role is filled by Asp246. Residue 256–257 (SK) participates in substrate binding.

This sequence belongs to the eIF-2B alpha/beta/delta subunits family. MtnA subfamily.

It catalyses the reaction 5-(methylsulfanyl)-alpha-D-ribose 1-phosphate = 5-(methylsulfanyl)-D-ribulose 1-phosphate. It participates in amino-acid biosynthesis; L-methionine biosynthesis via salvage pathway; L-methionine from S-methyl-5-thio-alpha-D-ribose 1-phosphate: step 1/6. Catalyzes the interconversion of methylthioribose-1-phosphate (MTR-1-P) into methylthioribulose-1-phosphate (MTRu-1-P). This is Methylthioribose-1-phosphate isomerase from Pseudomonas putida (strain GB-1).